The chain runs to 739 residues: Catalase-peroxidase 2 (739 aa).

The N-terminal stretch at 1 to 26 is a signal peptide; that stretch reads MKKTTIPTLSALTLAMSLAFGGAAIA. The tryptophyl-tyrosyl-methioninium (Trp-Tyr) (with M-253) cross-link spans 105-227; that stretch reads WHSAGVYRIF…MGATQMGLIY (123 aa). His-106 (proton acceptor) is an active-site residue. Residues 227–253 constitute a cross-link (tryptophyl-tyrosyl-methioninium (Tyr-Met) (with W-105)); the sequence is YVNPEGPNGVPDPLASAKEIRDTFGRM. His-268 provides a ligand contact to heme b.

Belongs to the peroxidase family. Peroxidase/catalase subfamily. As to quaternary structure, homodimer or homotetramer. Requires heme b as cofactor. In terms of processing, formation of the three residue Trp-Tyr-Met cross-link is important for the catalase, but not the peroxidase activity of the enzyme.

It catalyses the reaction H2O2 + AH2 = A + 2 H2O. It carries out the reaction 2 H2O2 = O2 + 2 H2O. Functionally, bifunctional enzyme with both catalase and broad-spectrum peroxidase activity. This chain is Catalase-peroxidase 2, found in Shewanella sp. (strain MR-4).